The sequence spans 331 residues: Ketol-acid reductoisomerase (NADP(+)) (331 aa).

The 181-residue stretch at 3–183 (AQMYYDDDAD…GGTRAGALKT (181 aa)) folds into the KARI N-terminal Rossmann domain. NADP(+) is bound by residues 26-29 (YGSQ), S52, and S54. Residue H109 is part of the active site. G135 is an NADP(+) binding site. Positions 184–329 (TFKEETETDL…TELRSLMSWL (146 aa)) constitute a KARI C-terminal knotted domain. The Mg(2+) site is built by D192, E196, E228, and E232. S253 lines the substrate pocket.

Belongs to the ketol-acid reductoisomerase family. The cofactor is Mg(2+).

It carries out the reaction (2R)-2,3-dihydroxy-3-methylbutanoate + NADP(+) = (2S)-2-acetolactate + NADPH + H(+). It catalyses the reaction (2R,3R)-2,3-dihydroxy-3-methylpentanoate + NADP(+) = (S)-2-ethyl-2-hydroxy-3-oxobutanoate + NADPH + H(+). It participates in amino-acid biosynthesis; L-isoleucine biosynthesis; L-isoleucine from 2-oxobutanoate: step 2/4. It functions in the pathway amino-acid biosynthesis; L-valine biosynthesis; L-valine from pyruvate: step 2/4. Its function is as follows. Involved in the biosynthesis of branched-chain amino acids (BCAA). Catalyzes an alkyl-migration followed by a ketol-acid reduction of (S)-2-acetolactate (S2AL) to yield (R)-2,3-dihydroxy-isovalerate. In the isomerase reaction, S2AL is rearranged via a Mg-dependent methyl migration to produce 3-hydroxy-3-methyl-2-ketobutyrate (HMKB). In the reductase reaction, this 2-ketoacid undergoes a metal-dependent reduction by NADPH to yield (R)-2,3-dihydroxy-isovalerate. The chain is Ketol-acid reductoisomerase (NADP(+)) from Thermobifida fusca (strain YX).